We begin with the raw amino-acid sequence, 378 residues long: Succinyl-diaminopimelate desuccinylase (378 aa).

Zn(2+) is bound at residue His77. Asp79 is a catalytic residue. Residue Asp108 participates in Zn(2+) binding. The active-site Proton acceptor is the Glu138. Zn(2+) is bound by residues Glu139, Glu167, and His350.

It belongs to the peptidase M20A family. DapE subfamily. As to quaternary structure, homodimer. Requires Zn(2+) as cofactor. It depends on Co(2+) as a cofactor.

It carries out the reaction N-succinyl-(2S,6S)-2,6-diaminopimelate + H2O = (2S,6S)-2,6-diaminopimelate + succinate. It functions in the pathway amino-acid biosynthesis; L-lysine biosynthesis via DAP pathway; LL-2,6-diaminopimelate from (S)-tetrahydrodipicolinate (succinylase route): step 3/3. Catalyzes the hydrolysis of N-succinyl-L,L-diaminopimelic acid (SDAP), forming succinate and LL-2,6-diaminopimelate (DAP), an intermediate involved in the bacterial biosynthesis of lysine and meso-diaminopimelic acid, an essential component of bacterial cell walls. This chain is Succinyl-diaminopimelate desuccinylase, found in Erythrobacter litoralis (strain HTCC2594).